Reading from the N-terminus, the 431-residue chain is Enolase (431 aa).

Q167 is a (2R)-2-phosphoglycerate binding site. E209 (proton donor) is an active-site residue. Residues D246, E289, and D316 each coordinate Mg(2+). The (2R)-2-phosphoglycerate site is built by K341, R370, S371, and K392. K341 serves as the catalytic Proton acceptor.

It belongs to the enolase family. Component of the RNA degradosome, a multiprotein complex involved in RNA processing and mRNA degradation. Mg(2+) is required as a cofactor.

It localises to the cytoplasm. The protein localises to the secreted. Its subcellular location is the cell surface. The catalysed reaction is (2R)-2-phosphoglycerate = phosphoenolpyruvate + H2O. The protein operates within carbohydrate degradation; glycolysis; pyruvate from D-glyceraldehyde 3-phosphate: step 4/5. Catalyzes the reversible conversion of 2-phosphoglycerate (2-PG) into phosphoenolpyruvate (PEP). It is essential for the degradation of carbohydrates via glycolysis. The polypeptide is Enolase (Shewanella loihica (strain ATCC BAA-1088 / PV-4)).